Consider the following 392-residue polypeptide: L-rhamnonate dehydratase (392 aa).

Positions 22 and 48 each coordinate substrate. Mg(2+) contacts are provided by aspartate 214, glutamate 240, and glutamate 268. Residue histidine 318 is the Proton acceptor of the active site. Glutamate 338 serves as a coordination point for substrate.

This sequence belongs to the mandelate racemase/muconate lactonizing enzyme family. RhamD subfamily. As to quaternary structure, homooctamer; tetramer of dimers. The cofactor is Mg(2+).

It carries out the reaction L-rhamnonate = 2-dehydro-3-deoxy-L-rhamnonate + H2O. Catalyzes the dehydration of L-rhamnonate to 2-keto-3-deoxy-L-rhamnonate (KDR). This Paraburkholderia phymatum (strain DSM 17167 / CIP 108236 / LMG 21445 / STM815) (Burkholderia phymatum) protein is L-rhamnonate dehydratase.